The primary structure comprises 156 residues: Endoribonuclease YbeY (156 aa).

His122, His126, and His132 together coordinate Zn(2+).

Belongs to the endoribonuclease YbeY family. Zn(2+) serves as cofactor.

It localises to the cytoplasm. In terms of biological role, single strand-specific metallo-endoribonuclease involved in late-stage 70S ribosome quality control and in maturation of the 3' terminus of the 16S rRNA. This is Endoribonuclease YbeY from Bacillus cytotoxicus (strain DSM 22905 / CIP 110041 / 391-98 / NVH 391-98).